The chain runs to 206 residues: Small ribosomal subunit protein uS4 (206 aa).

Positions 96–156 (GRLDNVVYRM…EKSKNQLRIQ (61 aa)) constitute an S4 RNA-binding domain.

This sequence belongs to the universal ribosomal protein uS4 family. As to quaternary structure, part of the 30S ribosomal subunit. Contacts protein S5. The interaction surface between S4 and S5 is involved in control of translational fidelity.

In terms of biological role, one of the primary rRNA binding proteins, it binds directly to 16S rRNA where it nucleates assembly of the body of the 30S subunit. With S5 and S12 plays an important role in translational accuracy. This is Small ribosomal subunit protein uS4 from Saccharophagus degradans (strain 2-40 / ATCC 43961 / DSM 17024).